We begin with the raw amino-acid sequence, 216 residues long: Probable transaldolase (216 aa).

Residue lysine 83 is the Schiff-base intermediate with substrate of the active site.

This sequence belongs to the transaldolase family. Type 3B subfamily.

The protein resides in the cytoplasm. It carries out the reaction D-sedoheptulose 7-phosphate + D-glyceraldehyde 3-phosphate = D-erythrose 4-phosphate + beta-D-fructose 6-phosphate. Its pathway is carbohydrate degradation; pentose phosphate pathway; D-glyceraldehyde 3-phosphate and beta-D-fructose 6-phosphate from D-ribose 5-phosphate and D-xylulose 5-phosphate (non-oxidative stage): step 2/3. Transaldolase is important for the balance of metabolites in the pentose-phosphate pathway. The protein is Probable transaldolase of Thermoanaerobacter sp. (strain X514).